The chain runs to 525 residues: Putative ankyrin repeat protein FPV228 (525 aa).

ANK repeat units follow at residues 39–71, 72–122, 123–152, 156–185, 190–226, 227–254, 258–287, 291–320, and 324–353; these read HPDN…TRDI, LGNT…ACNN, LNQT…KVNI, YGNT…DVNI, YWYS…TRCR, LNTT…DINA, NDNA…DVNM, RGKT…NPNI, and IMNT…DINH.

The protein is Putative ankyrin repeat protein FPV228 of Fowlpox virus (strain NVSL) (FPV).